The chain runs to 619 residues: E3 ubiquitin-protein ligase DTX4 (619 aa).

2 WWE domains span residues 1 to 78 (MLLA…PVRR) and 79 to 155 (NYYD…RVRR). Disordered regions lie at residues 238-281 (KPLD…PGPN) and 358-389 (PPPV…KGKT). The segment covering 261-273 (QASSMPTGTTMGS) has biased composition (polar residues). Over residues 378 to 387 (KTTKKQAKKG) the composition is skewed to basic residues. The segment at 409 to 468 (CTICMERLTAPSGYKGPQPTVKPDLVGKLSRCGHVYHIYCLVAMYNNGNKDGSLQCPTCK) adopts an RING-type; atypical zinc-finger fold.

Belongs to the Deltex family. In terms of assembly, interacts with NLRP4.

The protein resides in the cytoplasm. The catalysed reaction is S-ubiquitinyl-[E2 ubiquitin-conjugating enzyme]-L-cysteine + [acceptor protein]-L-lysine = [E2 ubiquitin-conjugating enzyme]-L-cysteine + N(6)-ubiquitinyl-[acceptor protein]-L-lysine.. The protein operates within protein modification; protein ubiquitination. Functionally, regulator of Notch signaling, a signaling pathway involved in cell-cell communications that regulates a broad spectrum of cell-fate determinations. Functions as a ubiquitin ligase protein in vivo, mediating 'Lys48'-linked polyubiquitination and promoting degradation of TBK1, targeting to TBK1 requires interaction with NLRP4. The protein is E3 ubiquitin-protein ligase DTX4 (DTX4) of Homo sapiens (Human).